Reading from the N-terminus, the 338-residue chain is Microtubule-associated protein RP/EB family member 2 (338 aa).

The segment at 1-21 (MPGPTQALSPNGENNNDIIQD) is disordered. The Calponin-homology (CH) domain maps to 57-159 (TMSRHDIIAW…FIQWFKKFFD (103 aa)). Disordered stretches follow at residues 171–241 (EARQ…KDLE) and 300–338 (SEEHESHTEEHEGEEQVHEQPSSRRSTDSRSVSDNFHFV). Over residues 200–234 (SPTAGAAKSSPASKPGSTPSRPSSAKKAAPSSSAS) the composition is skewed to low complexity. The EB1 C-terminal domain maps to 236–306 (SDKDLETQVI…LYASEEHESH (71 aa)). Residues 300 to 327 (SEEHESHTEEHEGEEQVHEQPSSRRSTD) are compositionally biased toward basic and acidic residues. Low complexity predominate over residues 328-338 (SRSVSDNFHFV).

This sequence belongs to the MAPRE family.

It is found in the cytoplasm. The protein localises to the cytoskeleton. In terms of biological role, may be involved in microtubule polymerization, and spindle function by stabilizing microtubules and anchoring them at centrosomes. The sequence is that of Microtubule-associated protein RP/EB family member 2 (MAPRE2) from Gallus gallus (Chicken).